The primary structure comprises 355 residues: Protein RecA (355 aa).

Residue 72–79 (GPESSGKT) coordinates ATP.

This sequence belongs to the RecA family.

It localises to the cytoplasm. Can catalyze the hydrolysis of ATP in the presence of single-stranded DNA, the ATP-dependent uptake of single-stranded DNA by duplex DNA, and the ATP-dependent hybridization of homologous single-stranded DNAs. It interacts with LexA causing its activation and leading to its autocatalytic cleavage. The chain is Protein RecA from Wolbachia sp. subsp. Drosophila simulans (strain wRi).